A 652-amino-acid polypeptide reads, in one-letter code: uncharacterized protein (652 aa).

Basic and acidic residues-rich tracts occupy residues 1–13 and 641–652; these read MSVTESKAKTERK and ATERTDNLADAA. 2 disordered regions span residues 1 to 21 and 628 to 652; these read MSVTESKAKTERKSSRKPAKT and VPGWMCAPRPQTDATERTDNLADAA.

The protein belongs to the ParB family.

This is an uncharacterized protein from Escherichia coli O157:H7.